We begin with the raw amino-acid sequence, 161 residues long: D-amino-acid N-acetyltransferase HPA3 (161 aa).

N-acetylserine is present on serine 2. In terms of domain architecture, N-acetyltransferase spans 14-161 (IVVKAIEPKD…DKVLYKRNGY (148 aa)). Residue 98–111 (LYVTERARVKGVGR) participates in acetyl-CoA binding.

The protein belongs to the acetyltransferase family. GNAT subfamily. Autoacetylates in an intermolecular reaction.

It is found in the cytoplasm. The protein localises to the nucleus. It carries out the reaction a D-alpha-amino acid + acetyl-CoA = an N-acetyl-D-amino acid + CoA + H(+). In terms of biological role, N-acetyltransferase that acts on a wide range of D-amino acids. Catalyzes the N-acetylation through an ordered bi-bi mechanism, in which acetyl-CoA is the first substrate to be bound and CoA is the last product to be liberated. D-amino acids are toxic for the cell and their N-acetylation, preceding removal from cells, plays an important role in detoxification of D-amino acids. In vitro, capable of acetylating histone H4 at 'Lys-8' and polyamines like putrescine, spermidine and spermine. This is D-amino-acid N-acetyltransferase HPA3 from Saccharomyces cerevisiae (strain ATCC 204508 / S288c) (Baker's yeast).